Consider the following 160-residue polypeptide: MSRFRIGNGYDIHRLVEGRPLILGGIQLEHSLGLDGHSDADVLTHAIMDALLGALSLGDIGHYFPPTDPQWKGADSLKLLAQVNQLIRDRGWTIGNLDSVVVAEQPKLKPHIAAMRDRLAKVLELEPDQIGIKATTNEKLGPTGREEGICAYAVALLVRD.

Aspartate 11 and histidine 13 together coordinate a divalent metal cation. 4-CDP-2-C-methyl-D-erythritol 2-phosphate is bound by residues 11-13 and 37-38; these read DIH and HS. An a divalent metal cation-binding site is contributed by histidine 45. 4-CDP-2-C-methyl-D-erythritol 2-phosphate is bound by residues 59-61, 135-138, and arginine 145; these read DIG and TTNE.

The protein belongs to the IspF family. Homotrimer. The cofactor is a divalent metal cation.

The enzyme catalyses 4-CDP-2-C-methyl-D-erythritol 2-phosphate = 2-C-methyl-D-erythritol 2,4-cyclic diphosphate + CMP. Its pathway is isoprenoid biosynthesis; isopentenyl diphosphate biosynthesis via DXP pathway; isopentenyl diphosphate from 1-deoxy-D-xylulose 5-phosphate: step 4/6. Its function is as follows. Involved in the biosynthesis of isopentenyl diphosphate (IPP) and dimethylallyl diphosphate (DMAPP), two major building blocks of isoprenoid compounds. Catalyzes the conversion of 4-diphosphocytidyl-2-C-methyl-D-erythritol 2-phosphate (CDP-ME2P) to 2-C-methyl-D-erythritol 2,4-cyclodiphosphate (ME-CPP) with a corresponding release of cytidine 5-monophosphate (CMP). This chain is 2-C-methyl-D-erythritol 2,4-cyclodiphosphate synthase, found in Synechococcus elongatus (strain ATCC 33912 / PCC 7942 / FACHB-805) (Anacystis nidulans R2).